Here is a 426-residue protein sequence, read N- to C-terminus: Glutamyl-tRNA reductase (426 aa).

Substrate is bound by residues 49 to 52 (TCNR), Ser-109, 114 to 116 (EGQ), and Gln-120. Cys-50 acts as the Nucleophile in catalysis. 189–194 (GAGETG) is a binding site for NADP(+).

The protein belongs to the glutamyl-tRNA reductase family. Homodimer.

The enzyme catalyses (S)-4-amino-5-oxopentanoate + tRNA(Glu) + NADP(+) = L-glutamyl-tRNA(Glu) + NADPH + H(+). Its pathway is porphyrin-containing compound metabolism; protoporphyrin-IX biosynthesis; 5-aminolevulinate from L-glutamyl-tRNA(Glu): step 1/2. The protein operates within porphyrin-containing compound metabolism; chlorophyll biosynthesis. Its function is as follows. Catalyzes the NADPH-dependent reduction of glutamyl-tRNA(Glu) to glutamate 1-semialdehyde (GSA). In Chlorobium phaeobacteroides (strain BS1), this protein is Glutamyl-tRNA reductase.